A 98-amino-acid polypeptide reads, in one-letter code: Phosphoribosyl-ATP pyrophosphatase (98 aa).

This sequence belongs to the PRA-PH family.

It localises to the cytoplasm. The catalysed reaction is 1-(5-phospho-beta-D-ribosyl)-ATP + H2O = 1-(5-phospho-beta-D-ribosyl)-5'-AMP + diphosphate + H(+). It functions in the pathway amino-acid biosynthesis; L-histidine biosynthesis; L-histidine from 5-phospho-alpha-D-ribose 1-diphosphate: step 2/9. The polypeptide is Phosphoribosyl-ATP pyrophosphatase (Haloarcula marismortui (strain ATCC 43049 / DSM 3752 / JCM 8966 / VKM B-1809) (Halobacterium marismortui)).